A 306-amino-acid polypeptide reads, in one-letter code: Porphobilinogen deaminase (306 aa).

S-(dipyrrolylmethanemethyl)cysteine is present on cysteine 239.

Belongs to the HMBS family. As to quaternary structure, monomer. Dipyrromethane is required as a cofactor.

It catalyses the reaction 4 porphobilinogen + H2O = hydroxymethylbilane + 4 NH4(+). It functions in the pathway porphyrin-containing compound metabolism; protoporphyrin-IX biosynthesis; coproporphyrinogen-III from 5-aminolevulinate: step 2/4. Its function is as follows. Tetrapolymerization of the monopyrrole PBG into the hydroxymethylbilane pre-uroporphyrinogen in several discrete steps. This chain is Porphobilinogen deaminase, found in Helicobacter pylori (strain G27).